The chain runs to 554 residues: Macrophage colony-stimulating factor 1 (554 aa).

The signal sequence occupies residues 1–32 (MTAPGAAGRCPPTTWLGSLLLLVCLLASRSIT). The Lumenal segment spans residues 33–496 (EEVSEYCSHM…GSFSPQLQES (464 aa)). 3 disulfides stabilise this stretch: Cys-39–Cys-122, Cys-80–Cys-171, and Cys-134–Cys-178. Residues Asn-154 and Asn-172 are each glycosylated (N-linked (GlcNAc...) asparagine). Positions 224–488 (EDSEGTEGSS…TGHERQSEGS (265 aa)) are disordered. Thr-266 is modified (phosphothreonine; by FAM20C). Residue Ser-309 is glycosylated (O-linked (Xyl...) (chondroitin sulfate) serine). Low complexity predominate over residues 344–354 (LSASSPLPASA). 2 O-linked (GalNAc...) threonine glycosylation sites follow: Thr-363 and Thr-365. Positions 404-433 (RISSLRPQGLSNPSTLSAQPQLSRSHSSGS) are enriched in polar residues. The interval 406 to 426 (SSLRPQGLSNPSTLSAQPQLS) is O-glycosylated at one site. Positions 440–453 (LEGRRSTRDRRSPA) are enriched in basic and acidic residues. A helical membrane pass occupies residues 497–517 (VFHLLVPSVILVLLAVGGLLF). Residues 518–554 (YRWRRRSHQEPQRADSPLEQPEGSPLTQDDRQVELPV) lie on the Cytoplasmic side of the membrane. The segment at 526-554 (QEPQRADSPLEQPEGSPLTQDDRQVELPV) is disordered. Residues 545-554 (QDDRQVELPV) show a composition bias toward basic and acidic residues.

Homodimer or heterodimer; disulfide-linked. Likely to exist in multiple forms: homodimer consisting of 2 identical 150-200 kDa proteoglycan subunits, heterodimer consisting of a 150-200 kDa proteoglycan subunit and a truncated 43 kDa subunit, and homodimer consisting of 2 identical 43 kDa subunits. Interacts with CSF1R. Post-translationally, N-glycosylated. In terms of processing, O-glycosylated; contains chondroitin sulfate. O-glycosylated with core 1 or possibly core 8 glycans. O-glycosylated.

The protein localises to the cell membrane. It is found in the secreted. The protein resides in the extracellular space. Its function is as follows. Cytokine that plays an essential role in the regulation of survival, proliferation and differentiation of hematopoietic precursor cells, especially mononuclear phagocytes, such as macrophages and monocytes. Promotes the release of pro-inflammatory chemokines, and thereby plays an important role in innate immunity and in inflammatory processes. Plays an important role in the regulation of osteoclast proliferation and differentiation, the regulation of bone resorption, and is required for normal bone development. Required for normal male and female fertility. Promotes reorganization of the actin cytoskeleton, regulates formation of membrane ruffles, cell adhesion and cell migration. Plays a role in lipoprotein clearance. The polypeptide is Macrophage colony-stimulating factor 1 (CSF1) (Homo sapiens (Human)).